Here is a 782-residue protein sequence, read N- to C-terminus: MGKRDRADRDKKKSRKRHYEDEEDDEEDAPGNDPQEAVPSAAGKQVDESGTKVDEYGAKDYRLQMPLKDDHTSRPLWVAPDGHIFLEAFSPVYKYAQDFLVAIAESVCRPTHVHEYKLTAYSLYAAVSVGLQTSDITEYLRKLSKTGVPDGIMQFIKLCTVSYGKVKLVLKHNRYFVESSHPDVIQHLLQDPVIRECRLRNSEGEATELITETFTSKSAISKTAESSGGPSTSRVTDPQGKSDIPMDLFDFYEQMDKDEEEEEETQTVSFEVKQEMIEELQKRCIHLEYPLLAEYDFRNDSVNPDINIDLKPTAVLRPYQEKSLRKMFGNGRARSGVIVLPCGAGKSLVGVTAACTVRKRCLVLGNSAVSVEQWKAQFKMWSTIDDSQICRFTSDAKDKPIGCSVAISTYSMLGHTTKRSWEAERVMEWLKTQEWGLMILDEVHTIPAKMFRRVLTIVQAHCKLGLTATLVREDDKIVDLNFLIGPKLYEANWMELQNNGYIAKVQCAEVWCPMSPEFYREYVAIKTKKRILLYTMNPNKFRACQFLIKFHERRNDKIIVFADNVFALKEYAIRLNKPYIYGPTSQGERMQILQNFKHNPKINTIFISKVGDTSFDLPEANVLIQISSHGGSRRQEAQRLGRVLRAKKGMVAEEYNAFFYSLVSQDTQEMAYSTKRQRFLVDQGYSFKVITKLAGMEEEDLAFSTKEEQQQLLQKVLAATDLDAEEEVVAGEFGSRSSQASRRFGTMSSMSGADDTVYMEYHSSRSKAPSKHVHPLFKRFRK.

Residues 1–11 show a composition bias toward basic and acidic residues; it reads MGKRDRADRDK. 2 disordered regions span residues 1–51 and 218–241; these read MGKR…ESGT and SAISKTAESSGGPSTSRVTDPQGK. A Nuclear localization signal motif is present at residues 6–18; that stretch reads RADRDKKKSRKRH. Positions 21–30 are enriched in acidic residues; that stretch reads DEEDDEEDAP. Residues 218–236 are compositionally biased toward polar residues; that stretch reads SAISKTAESSGGPSTSRVT. The region spanning 327 to 488 is the Helicase ATP-binding domain; sequence MFGNGRARSG…DLNFLIGPKL (162 aa). Residue 340-347 participates in ATP binding; the sequence is LPCGAGKS. The DEVH box signature appears at 441 to 444; the sequence is DEVH. Positions 542–702 constitute a Helicase C-terminal domain; sequence RACQFLIKFH…LAGMEEEDLA (161 aa). A Phosphoserine modification is found at Ser686. Ser751 carries the phosphoserine; by CK2 modification.

The protein belongs to the helicase family. RAD25/XPB subfamily. Component of the 7-subunit TFIIH core complex composed of XPB/ERCC3, XPD/ERCC2, GTF2H1, GTF2H2, GTF2H3, GTF2H4 and GTF2H5, which is active in NER. The core complex associates with the 3-subunit CDK-activating kinase (CAK) module composed of CCNH/cyclin H, CDK7 and MNAT1 to form the 10-subunit holoenzyme (holo-TFIIH) active in transcription. Interacts with PUF60. Interacts with ATF7IP. Interacts with KAT2A; leading to KAT2A recruitment to promoters and acetylation of histones. Part of TBP-based Pol II pre-initiation complex (PIC), in which Pol II core assembles with general transcription factors and other specific initiation factors including GTF2E1, GTF2E2, GTF2F1, GTF2F2, TCEA1, ERCC2, ERCC3, GTF2H2, GTF2H3, GTF2H4, GTF2H5, GTF2A1, GTF2A2, GTF2B and TBP; this large multi-subunit PIC complex mediates DNA unwinding and targets Pol II core to the transcription start site where the first phosphodiester bond forms. Post-translationally, phosphorylation on Ser-751 by CK2 controls the 5'-excision activity of ERCC1-XPF endonuclease; phosphorylated protein inhibits the excision activity and thus NER. Dephosphorylation reactivates the 5'-excision step. Phosphorylation has no effect on transcription or the 3'-5' helicase activity.

It localises to the nucleus. It carries out the reaction Couples ATP hydrolysis with the unwinding of duplex DNA by translocating in the 3'-5' direction.. The catalysed reaction is ATP + H2O = ADP + phosphate + H(+). Its activity is regulated as follows. Phosphorylation on Ser-751 by CK2 controls the 5'-excision activity of ERCC1-XPF endonuclease; phosphorylated protein inhibits the excision activity and thus NER. ATPase activity is stimulated by TFIIH subunit p52 (GTF2H4). DNA translocase activity by this subunit in TFIIH is stimulated by XPA, ERCC5/XPG and XFP plus ERCC1. Functionally, ATP-dependent 3'-5' DNA helicase/translocase; binds dsDNA rather than ssDNA, unzipping it in a translocase rather than classical helicase activity. Component of the general transcription and DNA repair factor IIH (TFIIH) core complex. When complexed to CDK-activating kinase (CAK), involved in RNA transcription by RNA polymerase II. The ATPase activity of XPB/ERCC3, but not its helicase activity, is required for DNA opening; it may wrap around the damaged DNA wedging it open, causing localized melting and twisting that allows XPD/ERCC2 helicase to anchor. The ATP-dependent helicase activity of XPB/ERCC3 may be required for promoter escape. Also involved in transcription-coupled nucleotide excision repair (NER) of damaged DNA. In NER, TFIIH acts by opening DNA around the lesion to allow the excision of the damaged oligonucleotide and its replacement by a new DNA fragment. The structure of the TFIIH transcription complex differs from the NER-TFIIH complex; large movements by XPD/ERCC2 and XPB/ERCC3 are stabilized by XPA. This Pongo abelii (Sumatran orangutan) protein is General transcription and DNA repair factor IIH helicase/translocase subunit XPB (ERCC3).